The primary structure comprises 65 residues: uncharacterized protein (65 aa).

Helical transmembrane passes span 4 to 24 (TIWL…MLYP) and 45 to 65 (FGGG…KTIG).

It is found in the cell membrane. This is an uncharacterized protein from Escherichia coli O157:H7.